Consider the following 282-residue polypeptide: MLEQCSKNIEKLRNKCPLTHCITNYVTINDCANVVLAIGGSPAMANEAPEIEEFVEAAGVTIINMGTLLEDQIEPMQIAACHTKKTNTPLVLDPVAVGVSKLRNDITIDLINKSSVDVIRGNMSEIKAIANLFNITDEKSVAKGVDVSSDDIITKDNIKSNASLVKAVADKLNTTIAVSGAIDIISDGVSIYLIDNGEEVMSKITGSGCMLTCVIGSFCAITSPLEAAIIGSLSMAISGELARRKMEINNEGSGSFRTYLIDMMYNMNDETIMKYGKLYKLE.

A substrate-binding site is contributed by methionine 44. Arginine 120 and serine 179 together coordinate ATP. A substrate-binding site is contributed by glycine 206.

This sequence belongs to the Thz kinase family. Requires Mg(2+) as cofactor.

The enzyme catalyses 5-(2-hydroxyethyl)-4-methylthiazole + ATP = 4-methyl-5-(2-phosphooxyethyl)-thiazole + ADP + H(+). Its pathway is cofactor biosynthesis; thiamine diphosphate biosynthesis; 4-methyl-5-(2-phosphoethyl)-thiazole from 5-(2-hydroxyethyl)-4-methylthiazole: step 1/1. Its function is as follows. Catalyzes the phosphorylation of the hydroxyl group of 4-methyl-5-beta-hydroxyethylthiazole (THZ). In Methanosphaera stadtmanae (strain ATCC 43021 / DSM 3091 / JCM 11832 / MCB-3), this protein is Hydroxyethylthiazole kinase 2.